The sequence spans 363 residues: Biotin synthase (363 aa).

Positions 38-266 (NTVQVSTLLS…ETQVRLSAGR (229 aa)) constitute a Radical SAM core domain. Residues cysteine 53, cysteine 57, and cysteine 60 each coordinate [4Fe-4S] cluster. [2Fe-2S] cluster contacts are provided by cysteine 97, cysteine 129, cysteine 189, and arginine 261. Residues 315–363 (KAFEKKSQPESVAAEKSKYQSQGEKPRWSRPEHKIDRNLEAQQNAKTKA) form a disordered region. Basic and acidic residues predominate over residues 316 to 353 (AFEKKSQPESVAAEKSKYQSQGEKPRWSRPEHKIDRNL). Positions 354-363 (EAQQNAKTKA) are enriched in polar residues.

Belongs to the radical SAM superfamily. Biotin synthase family. In terms of assembly, homodimer. Requires [4Fe-4S] cluster as cofactor. [2Fe-2S] cluster is required as a cofactor.

It catalyses the reaction (4R,5S)-dethiobiotin + (sulfur carrier)-SH + 2 reduced [2Fe-2S]-[ferredoxin] + 2 S-adenosyl-L-methionine = (sulfur carrier)-H + biotin + 2 5'-deoxyadenosine + 2 L-methionine + 2 oxidized [2Fe-2S]-[ferredoxin]. The protein operates within cofactor biosynthesis; biotin biosynthesis; biotin from 7,8-diaminononanoate: step 2/2. Its function is as follows. Catalyzes the conversion of dethiobiotin (DTB) to biotin by the insertion of a sulfur atom into dethiobiotin via a radical-based mechanism. This is Biotin synthase from Christiangramia forsetii (strain DSM 17595 / CGMCC 1.15422 / KT0803) (Gramella forsetii).